A 248-amino-acid polypeptide reads, in one-letter code: Protein UL24 homolog (248 aa).

Residues 194 to 248 form a disordered region; that stretch reads DRPRPTAQGHRPRTHVGPKPSQLTARVPRSARAGRAGGRKGQVGAVGQVCPGAQK. A compositionally biased stretch (low complexity) spans 218–227; the sequence is ARVPRSARAG.

This sequence belongs to the herpesviridae UL24 family.

It localises to the virion. The protein localises to the host cytoplasm. The protein resides in the host nucleus. It is found in the host nucleolus. Its subcellular location is the host Golgi apparatus. In terms of biological role, may participate in nuclear egress of viral particles. Plays a role in the dispersal of several host nucleolar proteins including NCL/nucleolin and NPM1. Since deletion of host NCL/nucleolin negatively impact on nuclear egress, UL24 supposedly acts on this process through its effect on host nucleoli. This is Protein UL24 homolog from Homo sapiens (Human).